Reading from the N-terminus, the 90-residue chain is Small ribosomal subunit protein bS20 (90 aa).

The protein belongs to the bacterial ribosomal protein bS20 family.

Its function is as follows. Binds directly to 16S ribosomal RNA. The protein is Small ribosomal subunit protein bS20 of Mesomycoplasma hyopneumoniae (strain J / ATCC 25934 / NCTC 10110) (Mycoplasma hyopneumoniae).